Reading from the N-terminus, the 1673-residue chain is Protein-methionine sulfoxide oxidase mical3b (1673 aa).

The interval 2-492 (WDGQSEMCQA…RHLIDTGEGP (491 aa)) is monooxygenase domain. Residues cysteine 96, 96-124 (CGLR…SRNN), glutamate 115, arginine 117, arginine 122, asparagine 124, and aspartate 396 contribute to the FAD site. The Calponin-homology (CH) domain occupies 512-618 (MARYSKLLSW…YLSQLHELLK (107 aa)). The tract at residues 647-714 (SKLGQSLSRK…PKASEGHSKV (68 aa)) is disordered. Residues 661–671 (DKKEKEADSVG) show a composition bias toward basic and acidic residues. The region spanning 791 to 853 (DVCYFCGRRV…KHHFSFRLAS (63 aa)) is the LIM zinc-binding domain. Residues 882–892 (LSSLGSVGTAT) show a composition bias toward low complexity. 5 disordered regions span residues 882–901 (LSSL…SSTH), 918–938 (RIEL…LQEV), 951–1100 (SLQE…KRSE), 1159–1188 (QSAR…TDGD), and 1357–1393 (GPDA…RETG). Positions 973–992 (LVWKKGEELHARTNGERKLD) are enriched in basic and acidic residues. 2 stretches are compositionally biased toward acidic residues: residues 993 to 1002 (LEEELKEEEG) and 1010 to 1041 (EGEE…DPDI). Residues 1081 to 1094 (SDLTPDPSTTPESS) are compositionally biased toward low complexity. Residues 1159–1182 (QSARICDSSTQTHSVTDLQETSPL) show a composition bias toward polar residues. 2 coiled-coil regions span residues 1475–1531 (EEEL…AVEK) and 1573–1638 (QEKN…VEQR). The 167-residue stretch at 1495–1661 (KQEELRRLHR…EKEEDSDLEA (167 aa)) folds into the bMERB domain.

It belongs to the Mical family. FAD is required as a cofactor.

Its subcellular location is the cytoplasm. It localises to the cytoskeleton. It is found in the nucleus. The enzyme catalyses L-methionyl-[F-actin] + NADPH + O2 + H(+) = L-methionyl-(R)-S-oxide-[F-actin] + NADP(+) + H2O. In terms of biological role, monooxygenase that promotes depolymerization of F-actin by mediating oxidation of specific methionine residues on actin. Acts by modifying actin subunits through the addition of oxygen to form methionine-sulfoxide, leading to promote actin filament severing and prevent repolymerization. Involved in exocytic vesicles tethering and fusion: the monooxygenase activity is required for this process. The polypeptide is Protein-methionine sulfoxide oxidase mical3b (mical3b) (Danio rerio (Zebrafish)).